The primary structure comprises 183 residues: MSINLNQIKQDLTQITNDVLTAANLRRGDIFVLGCSTSEVVGGHIGKASSREVGATIIETLLEILKPLDIQLAVQGCEHINRSLVMERSVAEAHDFEIVSVVPAMHAGGACSVAAFEQYSDPVEVEHTVAHAGLDIGDTAIGMHVKFVQVPVRPSLDTLGAAHVTALRSRPKYVGGPRATYDI.

Belongs to the UPF0340 family.

This is UPF0340 protein LCA_1354 from Latilactobacillus sakei subsp. sakei (strain 23K) (Lactobacillus sakei subsp. sakei).